Consider the following 182-residue polypeptide: ATP-dependent protease subunit HslV (182 aa).

Thr12 is a catalytic residue. The Na(+) site is built by Ala167, Cys170, and Thr173.

This sequence belongs to the peptidase T1B family. HslV subfamily. In terms of assembly, a double ring-shaped homohexamer of HslV is capped on each side by a ring-shaped HslU homohexamer. The assembly of the HslU/HslV complex is dependent on binding of ATP.

It localises to the cytoplasm. It carries out the reaction ATP-dependent cleavage of peptide bonds with broad specificity.. Allosterically activated by HslU binding. In terms of biological role, protease subunit of a proteasome-like degradation complex believed to be a general protein degrading machinery. The chain is ATP-dependent protease subunit HslV from Chlorobium phaeobacteroides (strain DSM 266 / SMG 266 / 2430).